Reading from the N-terminus, the 485-residue chain is Lysophospholipid acyltransferase 5 (485 aa).

Ala2 is subject to N-acetylalanine. The next 7 helical transmembrane spans lie at 35–55, 82–102, 108–128, 139–158, 176–196, 232–252, and 283–303; these read ASEQ…FALF, YNFG…FLIL, TITA…AGYY, WTMP…MDYY, IWGV…GAFL, LALG…ITED, and VTCW…FNGL. Residues Asn336 and His372 contribute to the active site. 3 helical membrane-spanning segments follow: residues 362-382, 420-440, and 448-468; these read GLSL…LVCF, LAQQ…FCLF, and VYKS…FILP. A Di-lysine motif motif is present at residues 482 to 485; sequence KKME.

It belongs to the membrane-bound acyltransferase family.

It localises to the endoplasmic reticulum membrane. It catalyses the reaction a 1-acyl-sn-glycero-3-phosphocholine + an acyl-CoA = a 1,2-diacyl-sn-glycero-3-phosphocholine + CoA. The enzyme catalyses a 1-acyl-sn-glycero-3-phosphoethanolamine + an acyl-CoA = a 1,2-diacyl-sn-glycero-3-phosphoethanolamine + CoA. The catalysed reaction is a 1-acyl-sn-glycero-3-phospho-L-serine + an acyl-CoA = a 1,2-diacyl-sn-glycero-3-phospho-L-serine + CoA. It carries out the reaction (9Z,12Z)-octadecadienoyl-CoA + a 1-acyl-sn-glycero-3-phosphocholine = 1-acyl-2-(9Z,12Z)-octadecadienoyl-sn-glycero-3-phosphocholine + CoA. It catalyses the reaction (5Z,8Z,11Z,14Z)-eicosatetraenoyl-CoA + a 1-acyl-sn-glycero-3-phosphocholine = 1-acyl-2-(5Z,8Z,11Z,14Z-eicosatetraenoyl)-sn-glycero-3-phosphocholine + CoA. The enzyme catalyses dodecanoyl-CoA + 1-hexadecanoyl-sn-glycero-3-phosphocholine = 1-hexadecanoyl-2-dodecanoyl-sn-glycero-3-phosphocholine + CoA. The catalysed reaction is octadecanoyl-CoA + 1-hexadecanoyl-sn-glycero-3-phosphocholine = 1-hexadecanoyl-2-octadecanoyl-sn-glycero-3-phosphocholine + CoA. It carries out the reaction 1-dodecanoyl-sn-glycero-3-phosphocholine + hexadecanoyl-CoA = 1-dodecanoyl-2-hexadecanoyl-sn-glycero-3-phosphocholine + CoA. It catalyses the reaction 1-tetradecanoyl-sn-glycero-3-phosphocholine + hexadecanoyl-CoA = 1-tetradecanoyl-2-hexadecanoyl-sn-glycero-3-phosphocholine + CoA. The enzyme catalyses 1-hexadecanoyl-sn-glycero-3-phosphocholine + hexadecanoyl-CoA = 1,2-dihexadecanoyl-sn-glycero-3-phosphocholine + CoA. The catalysed reaction is 1-octadecanoyl-sn-glycero-3-phosphocholine + hexadecanoyl-CoA = 1-octadecanoyl-2-hexadecanoyl-sn-glycero-3-phosphocholine + CoA. It carries out the reaction 1-(9Z-octadecenoyl)-sn-glycero-3-phosphocholine + hexadecanoyl-CoA = 1-(9Z-octadecenoyl)-2-hexadecanoyl-sn-glycero-3-phosphocholine + CoA. It catalyses the reaction (9Z)-hexadecenoyl-CoA + 1-hexadecanoyl-sn-glycero-3-phosphocholine = 1-hexadecanoyl-2-(9Z-hexadecenoyl)-sn-glycero-3-phosphocholine + CoA. The enzyme catalyses 1-hexadecanoyl-sn-glycero-3-phosphocholine + (9Z)-octadecenoyl-CoA = 1-hexadecanoyl-2-(9Z-octadecenoyl)-sn-glycero-3-phosphocholine + CoA. The catalysed reaction is (9Z,12Z)-octadecadienoyl-CoA + 1-hexadecanoyl-sn-glycero-3-phosphocholine = 1-hexadecanoyl-2-(9Z,12Z-octadecadienoyl)-sn-glycero-3-phosphocholine + CoA. It carries out the reaction 1-dodecanoyl-sn-glycero-3-phosphocholine + (5Z,8Z,11Z,14Z)-eicosatetraenoyl-CoA = 1-dodecanoyl-2-(5Z,8Z,11Z,14Z)-eicosatetraenoyl-sn-glycero-3-phosphocholine + CoA. It catalyses the reaction (5Z,8Z,11Z,14Z)-eicosatetraenoyl-CoA + 1-hexadecanoyl-sn-glycero-3-phosphocholine = 1-hexadecanoyl-2-(5Z,8Z,11Z,14Z-eicosatetraenoyl)-sn-glycero-3-phosphocholine + CoA. The enzyme catalyses 1-octadecanoyl-sn-glycero-3-phosphocholine + (5Z,8Z,11Z,14Z)-eicosatetraenoyl-CoA = 1-octadecanoyl-2-(5Z,8Z,11Z,14Z-eicosatetraenoyl)-sn-glycero-3-phosphocholine + CoA. The catalysed reaction is 1-eicosanoyl-sn-glycero-3-phosphocholine + (5Z,8Z,11Z,14Z)-eicosatetraenoyl-CoA = 1-eicosanoyl-2-(5Z,8Z,11Z,14Z)-eicosatetraenoyl-sn-glycero-3-phosphocholine + CoA. It carries out the reaction 1-(9Z-octadecenoyl)-sn-glycero-3-phosphocholine + (9Z)-octadecenoyl-CoA = 1,2-di-(9Z-octadecenoyl)-sn-glycero-3-phosphocholine + CoA. It catalyses the reaction 1-(9Z-octadecenoyl)-sn-glycero-3-phosphocholine + (9Z,12Z)-octadecadienoyl-CoA = 1-(9Z)-octadecenoyl-2-(9Z,12Z)-octadecadienoyl-sn-glycero-3-phosphocholine + CoA. The enzyme catalyses 1-(9Z-octadecenoyl)-sn-glycero-3-phosphocholine + (5Z,8Z,11Z,14Z)-eicosatetraenoyl-CoA = 1-(9Z)-octadecenoyl-2-(5Z,8Z,11Z,14Z)-icosatetraenoyl-sn-glycero-3-phosphocholine + CoA. The catalysed reaction is a 1-acyl-sn-glycero-3-phosphoethanolamine + (9Z,12Z)-octadecadienoyl-CoA = 1-acyl-2-(9Z,12Z)-octadecadienoyl-sn-glycero-3-phosphoethanolamine + CoA. It carries out the reaction 1-(9Z-octadecenoyl)-sn-glycero-3-phosphoethanolamine + (9Z,12Z)-octadecadienoyl-CoA = 1-(9Z)-octadecenoyl-2-(9Z,12Z)-octadecadienoyl-sn-glycero-3-phosphoethanolamine + CoA. It catalyses the reaction 1-(10Z-heptadecenoyl)-sn-glycero-3-phosphoethanolamine + (9Z,12Z)-octadecadienoyl-CoA = 1-(10Z-heptadecenoyl)-2-(9Z,12Z-octadecadienoyl)-sn-glycero-3-phosphoethanolamine + CoA. The enzyme catalyses a 1-acyl-sn-glycero-3-phosphoethanolamine + (5Z,8Z,11Z,14Z)-eicosatetraenoyl-CoA = 1-acyl-2-(5Z,8Z,11Z,14Z)-eicosatetraenoyl-sn-glycero-3-phosphoethanolamine + CoA. The catalysed reaction is 1-hexadecanoyl-sn-glycero-3-phosphoethanolamine + (5Z,8Z,11Z,14Z)-eicosatetraenoyl-CoA = 1-hexadecanoyl-2-(5Z,8Z,11Z,14Z-eicosatetraenoyl)-sn-glycero-3-phosphoethanolamine + CoA. It carries out the reaction 1-(9Z-octadecenoyl)-sn-glycero-3-phosphoethanolamine + (5Z,8Z,11Z,14Z)-eicosatetraenoyl-CoA = 1-(9Z)-octadecenoyl-2-(5Z,8Z,11Z,14Z)-eicosatetraenoyl-sn-glycero-3-phosphoethanolamine + CoA. It catalyses the reaction 1-(10Z-heptadecenoyl)-sn-glycero-3-phosphoethanolamine + (5Z,8Z,11Z,14Z)-eicosatetraenoyl-CoA = 1-(10Z-heptadecenoyl)-2-(5Z,8Z,11Z,14Z-eicosatetraenoyl)-sn-glycero-3-phosphoethanolamine + CoA. The enzyme catalyses a 1-O-(1Z-alkenyl)-sn-glycero-3-phosphoethanolamine + (5Z,8Z,11Z,14Z)-eicosatetraenoyl-CoA = 1-O-(1Z)-alkenyl-2-(5Z,8Z,11Z,14Z)-eicosatetraenoyl-sn-glycero-3-phosphoethanolamine + CoA. The catalysed reaction is a 1-acyl-sn-glycero-3-phospho-L-serine + (9Z,12Z)-octadecadienoyl-CoA = 1-acyl-2-(9Z,12Z-octadecadienoyl)-sn-glycero-3-phospho-L-serine + CoA. It carries out the reaction a 1-acyl-sn-glycero-3-phospho-L-serine + (5Z,8Z,11Z,14Z)-eicosatetraenoyl-CoA = 1-acyl-2-(5Z,8Z,11Z,14Z-eicosatetraenoyl)-sn-glycero-3-phospho-L-serine + CoA. It catalyses the reaction 1-hexadecanoyl-sn-glycero-3-phospho-L-serine + (9Z)-octadecenoyl-CoA = 1-hexadecanoyl-2-(9Z-octadecenoyl)-sn-glycero-3-phospho-L-serine + CoA. The enzyme catalyses 1-(9Z-octadecenoyl)-sn-glycero-3-phospho-L-serine + (9Z)-octadecenoyl-CoA = 1,2-di-(9Z)-octadecenoyl-sn-glycero-3-phospho-L-serine + CoA. The catalysed reaction is 1-hexadecanoyl-sn-glycero-3-phospho-L-serine + (9Z,12Z)-octadecadienoyl-CoA = 1-hexadecanoyl-2-(9Z,12Z-octadecadienoyl)-sn-glycero-3-phospho-L-serine + CoA. It carries out the reaction 1-(9Z-octadecenoyl)-sn-glycero-3-phospho-L-serine + (9Z,12Z)-octadecadienoyl-CoA = 1-(9Z-octadecenoyl)-2-(9Z,12Z-octadienoyl)-sn-glycero-3-phospho-L-serine + CoA. It catalyses the reaction 1-hexadecanoyl-sn-glycero-3-phospho-L-serine + (5Z,8Z,11Z,14Z)-eicosatetraenoyl-CoA = 1-hexadecanoyl-2-(5Z,8Z,11Z,14Z-eicosatetraenoyl)-sn-glycero-3-phospho-L-serine + CoA. The enzyme catalyses 1-(9Z-octadecenoyl)-sn-glycero-3-phospho-L-serine + (5Z,8Z,11Z,14Z)-eicosatetraenoyl-CoA = 1-(9Z-octadecenoyl)-2-(5Z,8Z,11Z,14Z-eicosatetraenoyl)-sn-glycero-3-phospho-L-serine + CoA. It functions in the pathway lipid metabolism; phospholipid metabolism. Its function is as follows. Lysophospholipid O-acyltransferase (LPLAT) that catalyzes the reacylation step of the phospholipid remodeling process also known as the Lands cycle. Catalyzes transfer of the fatty acyl chain from fatty acyl-CoA to 1-acyl lysophospholipid to form various classes of phospholipids. Converts 1-acyl lysophosphatidylcholine (LPC) into phosphatidylcholine (PC) (LPCAT activity), 1-acyl lysophosphatidylserine (LPS) into phosphatidylserine (PS) (LPSAT activity) and 1-acyl lysophosphatidylethanolamine (LPE) into phosphatidylethanolamine (PE) (LPEAT activity). Favors polyunsaturated fatty acyl-CoAs as acyl donors compared to saturated fatty acyl-CoAs. Has higher activity for LPC acyl acceptors compared to LPEs and LPSs. Can also transfer the fatty acyl chain from fatty acyl-CoA to 1-O-alkyl lysophospholipid or 1-O-alkenyl lysophospholipid with lower efficiency. Acts as a major LPC O-acyltransferase in liver and intestine. As a component of the liver X receptor/NR1H3 or NR1H2 signaling pathway, mainly catalyzes the incorporation of arachidonate into PCs of endoplasmic reticulum (ER) membranes, increasing membrane dynamics and enabling triacylglycerols transfer to nascent very low-density lipoprotein (VLDL) particles. Promotes processing of sterol regulatory protein SREBF1 in hepatocytes, likely by facilitating the translocation of SREBF1-SCAP complex from ER to the Golgi apparatus. Participates in mechanisms by which the liver X receptor/NR1H3 or NR1H2 signaling pathway counteracts lipid-induced ER stress response and inflammation. Down-regulates hepatic inflammation by limiting arachidonic acid availability for synthesis of inflammatory eicosanoids, such as prostaglandins. In enterocytes, acts as a component of a gut-brain feedback loop that coordinates dietary lipid absorption and food intake. Regulates the abundance of PCs containing linoleate and arachidonate in enterocyte membranes, enabling passive diffusion of fatty acids and cholesterol across the membrane for efficient chylomicron assembly. In the intestinal crypt, acts as a component of dietary-responsive phospholipid-cholesterol axis, regulating the biosynthesis of cholesterol and its mitogenic effects on intestinal stem cells. This Bos taurus (Bovine) protein is Lysophospholipid acyltransferase 5 (LPCAT3).